A 213-amino-acid chain; its full sequence is Phosphoribosyl-dephospho-CoA transferase (213 aa).

Catalysis depends on residues aspartate 135 and aspartate 137.

Belongs to the MdcG family.

The catalysed reaction is apo-[malonate decarboxylase ACP] + 2'-(5''-triphospho-alpha-D-ribosyl)-3'-dephospho-CoA = holo-[malonate decarboxylase ACP] + diphosphate. Its function is as follows. Transfers 2'-(5-triphosphoribosyl)-3'-dephosphocoenzyme-A to the apo-[acyl-carrier-protein] of the malonate decarboxylase to yield holo-[acyl-carrier-protein]. The chain is Phosphoribosyl-dephospho-CoA transferase from Xanthomonas campestris pv. campestris (strain ATCC 33913 / DSM 3586 / NCPPB 528 / LMG 568 / P 25).